A 449-amino-acid polypeptide reads, in one-letter code: Delta(8)-fatty-acid desaturase 2 (449 aa).

Residues 7–91 enclose the Cytochrome b5 heme-binding domain; the sequence is KRYVTSEDLK…VRDHHVSDVS (85 aa). Heme contacts are provided by His-42 and His-65. Helical transmembrane passes span 113–133 and 138–158; these read VTLY…YGVL and IWAH…SAYV. A Histidine box-1 motif is present at residues 160–164; it reads HDSGH. The helical transmembrane segment at 176–196 threads the bilayer; it reads LIQLLSGNCLTGISIAWWKWT. Residues 197–201 carry the Histidine box-2 motif; the sequence is HNAHH. The next 3 membrane-spanning stretches (helical) occupy residues 255-275, 284-304, and 311-331; these read FYPV…LLLF, ALNI…VSFL, and FIFV…FCLN. The Histidine box-3 motif lies at 374–378; the sequence is QLEHH.

It belongs to the fatty acid desaturase type 1 family. Requires Fe cation as cofactor. As to expression, highly expressed in flowers and siliques. Expressed at low levels in roots, leaves and stems.

It is found in the endoplasmic reticulum membrane. The enzyme catalyses an N-acyl-(4R)-4-hydroxysphinganine + 2 Fe(II)-[cytochrome b5] + O2 + 2 H(+) = a (4R,8E)-4-hydroxysphingenine ceramide + 2 Fe(III)-[cytochrome b5] + 2 H2O. It catalyses the reaction an N-acyl-(4R)-4-hydroxysphinganine + 2 Fe(II)-[cytochrome b5] + O2 + 2 H(+) = a (4R,8Z)-4-hydroxysphing-8-enine ceramide + 2 Fe(III)-[cytochrome b5] + 2 H2O. Plays a major role as delta(8)-fatty-acid desaturase which introduces a double bond at the 8-position in the long-chain base (LCB) of ceramides with or without a hydroxy group at the 4-position. The enzyme produces both the 8E and 8Z isomers (in a 4:1 ratio). This structural modification contributes to the quantitative partitioning of ceramides between the two major sphingolipid classes, glucosylceramides and glycosylinositolphosphoryl ceramides. Sphingolipids are important membrane components involved in environmental stress responses, such as resistance to chilling, and act as cell signaling molecules. The sequence is that of Delta(8)-fatty-acid desaturase 2 (SLD2) from Arabidopsis thaliana (Mouse-ear cress).